The sequence spans 983 residues: Receptor-like protein 19 (983 aa).

An N-terminal signal peptide occupies residues 1-25; it reads MMKGYITLSFLIILIFNFLDEFAAS. Residues 26–937 are Extracellular-facing; sequence TRHLCDPDQS…EEDEEEVISW (912 aa). Residues Asn66 and Asn102 are each glycosylated (N-linked (GlcNAc...) asparagine). 31 LRR repeats span residues 82 to 108, 111 to 135, 136 to 159, 161 to 183, 184 to 207, 209 to 231, 232 to 255, 256 to 281, 283 to 302, 303 to 327, 328 to 351, 353 to 375, 376 to 399, 401 to 424, 425 to 448, 450 to 474, 475 to 498, 501 to 524, 525 to 548, 550 to 571, 578 to 602, 603 to 628, 629 to 652, 654 to 674, 675 to 700, 702 to 720, 721 to 744, 793 to 817, 818 to 840, 841 to 865, and 867 to 890; these read FGDV…LFRL, LRFL…LETL, SNLT…IGNL, HLIF…LGYL, SHLT…IGNL, YLTT…LGSL, FHLT…LGNL, SHLT…NLSC, TSFI…SFGN, LNQL…LLNL, RKLS…MSSL, NLKL…LFNI, PSLK…NISS, SNLT…ISKL, VNLK…IFSH, KSIE…ILSS, FKLL…SLSN, LVLI…LRSQ, ELML…LWML, VLNY…TKLG, PPAM…ICEL, PYLS…NIQS, PYLQ…IFES, ISLD…LSHI, SSLG…SLQE, QVLV…KTQF, SKLR…FFVN, LKVF…IGLL, KELH…SMGN, LMAL…LGKL, and YLAY…QFQT. Residues Asn137, Asn158, Asn171, Asn190, Asn195, and Asn206 are each glycosylated (N-linked (GlcNAc...) asparagine). Residues Asn254 and Asn278 are each glycosylated (N-linked (GlcNAc...) asparagine). Residue Asn347 is glycosylated (N-linked (GlcNAc...) asparagine). Residues Asn389, Asn396, and Asn402 are each glycosylated (N-linked (GlcNAc...) asparagine). N-linked (GlcNAc...) asparagine glycosylation is found at Asn456, Asn461, Asn492, and Asn498. 4 N-linked (GlcNAc...) asparagine glycosylation sites follow: Asn555, Asn558, Asn590, and Asn616. 2 N-linked (GlcNAc...) asparagine glycosylation sites follow: Asn734 and Asn744. N-linked (GlcNAc...) asparagine glycosylation is present at Asn824. A glycan (N-linked (GlcNAc...) asparagine) is linked at Asn872. Residues 938 to 958 traverse the membrane as a helical segment; it reads IAAVIGFILGTALGLTFGCIL. Residues 959 to 983 lie on the Cytoplasmic side of the membrane; that stretch reads FSYKPDWFKNPFVRDKRRNIGTITH.

This sequence belongs to the RLP family.

Its subcellular location is the cell membrane. The protein is Receptor-like protein 19 of Arabidopsis thaliana (Mouse-ear cress).